Reading from the N-terminus, the 727-residue chain is Polyribonucleotide nucleotidyltransferase (727 aa).

D488 and D494 together coordinate Mg(2+). The region spanning 555 to 614 (PKLYTMKINPEKIRDVIGKGGATIRALTDETGCQINIEEDGTITIAATEAAKADEAKRRI) is the KH domain. Residues 624–692 (GKIYEGPVTK…DKGRVKLSMK (69 aa)) enclose the S1 motif domain. Positions 691 to 727 (MKALADRPAGDSGRPAPAERGERRERRDGGASEQQQQ) are disordered. A compositionally biased stretch (basic and acidic residues) spans 707-720 (PAERGERRERRDGG).

It belongs to the polyribonucleotide nucleotidyltransferase family. It depends on Mg(2+) as a cofactor.

The protein resides in the cytoplasm. It carries out the reaction RNA(n+1) + phosphate = RNA(n) + a ribonucleoside 5'-diphosphate. In terms of biological role, involved in mRNA degradation. Catalyzes the phosphorolysis of single-stranded polyribonucleotides processively in the 3'- to 5'-direction. This chain is Polyribonucleotide nucleotidyltransferase, found in Acidovorax sp. (strain JS42).